We begin with the raw amino-acid sequence, 175 residues long: Alkyl hydroperoxide reductase AhpD (175 aa).

The active-site Proton donor is the Cys131. A disulfide bridge connects residues Cys131 and Cys134. Cys134 (cysteine sulfenic acid (-SOH) intermediate) is an active-site residue.

The protein belongs to the AhpD family.

The enzyme catalyses N(6)-[(R)-dihydrolipoyl]-L-lysyl-[lipoyl-carrier protein] + a hydroperoxide = N(6)-[(R)-lipoyl]-L-lysyl-[lipoyl-carrier protein] + an alcohol + H2O. In terms of biological role, antioxidant protein with alkyl hydroperoxidase activity. Required for the reduction of the AhpC active site cysteine residues and for the regeneration of the AhpC enzyme activity. This chain is Alkyl hydroperoxide reductase AhpD, found in Brucella abortus (strain 2308).